We begin with the raw amino-acid sequence, 163 residues long: Cyclic pyranopterin monophosphate synthase (163 aa).

Substrate is bound by residues 79 to 81 (LCH) and 118 to 119 (ME). The active site involves Asp133.

The protein belongs to the MoaC family. Homohexamer; trimer of dimers.

It catalyses the reaction (8S)-3',8-cyclo-7,8-dihydroguanosine 5'-triphosphate = cyclic pyranopterin phosphate + diphosphate. It participates in cofactor biosynthesis; molybdopterin biosynthesis. Functionally, catalyzes the conversion of (8S)-3',8-cyclo-7,8-dihydroguanosine 5'-triphosphate to cyclic pyranopterin monophosphate (cPMP). This is Cyclic pyranopterin monophosphate synthase from Nocardioides sp. (strain ATCC BAA-499 / JS614).